The chain runs to 198 residues: Small ribosomal subunit protein uS4 (198 aa).

An S4 RNA-binding domain is found at 90–152; that stretch reads TRLDNLVLRA…SRSNELFKEN (63 aa).

This sequence belongs to the universal ribosomal protein uS4 family. In terms of assembly, part of the 30S ribosomal subunit. Contacts protein S5. The interaction surface between S4 and S5 is involved in control of translational fidelity.

Its function is as follows. One of the primary rRNA binding proteins, it binds directly to 16S rRNA where it nucleates assembly of the body of the 30S subunit. Functionally, with S5 and S12 plays an important role in translational accuracy. The chain is Small ribosomal subunit protein uS4 from Finegoldia magna (strain ATCC 29328 / DSM 20472 / WAL 2508) (Peptostreptococcus magnus).